We begin with the raw amino-acid sequence, 132 residues long: Small ribosomal subunit protein uS8 (132 aa).

This sequence belongs to the universal ribosomal protein uS8 family. As to quaternary structure, part of the 30S ribosomal subunit. Contacts proteins S5 and S12.

One of the primary rRNA binding proteins, it binds directly to 16S rRNA central domain where it helps coordinate assembly of the platform of the 30S subunit. This is Small ribosomal subunit protein uS8 from Streptococcus uberis (strain ATCC BAA-854 / 0140J).